The primary structure comprises 117 residues: Ribonuclease P protein component (117 aa).

It belongs to the RnpA family. In terms of assembly, consists of a catalytic RNA component (M1 or rnpB) and a protein subunit.

The enzyme catalyses Endonucleolytic cleavage of RNA, removing 5'-extranucleotides from tRNA precursor.. In terms of biological role, RNaseP catalyzes the removal of the 5'-leader sequence from pre-tRNA to produce the mature 5'-terminus. It can also cleave other RNA substrates such as 4.5S RNA. The protein component plays an auxiliary but essential role in vivo by binding to the 5'-leader sequence and broadening the substrate specificity of the ribozyme. In Aliivibrio fischeri (strain ATCC 700601 / ES114) (Vibrio fischeri), this protein is Ribonuclease P protein component.